The sequence spans 356 residues: Peptide chain release factor 1 (356 aa).

Gln233 carries the N5-methylglutamine modification.

It belongs to the prokaryotic/mitochondrial release factor family. In terms of processing, methylated by PrmC. Methylation increases the termination efficiency of RF1.

Its subcellular location is the cytoplasm. Functionally, peptide chain release factor 1 directs the termination of translation in response to the peptide chain termination codons UAG and UAA. The protein is Peptide chain release factor 1 of Halalkalibacterium halodurans (strain ATCC BAA-125 / DSM 18197 / FERM 7344 / JCM 9153 / C-125) (Bacillus halodurans).